The chain runs to 1243 residues: Plasma membrane calcium-transporting ATPase 2 (1243 aa).

Residues 1–13 show a composition bias toward polar residues; that stretch reads MGDMTNSDFYSKN. The interval 1–24 is disordered; that stretch reads MGDMTNSDFYSKNQRNESSHGGEF. The Cytoplasmic segment spans residues 1–94; it reads MGDMTNSDFY…NFIPPKKPKT (94 aa). Ser-18 is modified (phosphoserine). The helical transmembrane segment at 95–115 threads the bilayer; it reads FLQLVWEALQDVTLIILEIAA. Residues 116-152 are Extracellular-facing; sequence IISLGLSFYHPPGEGNEGCATAQGGAEDEGEAEAGWI. Residues 153 to 173 traverse the membrane as a helical segment; it reads EGAAILLSVICVVLVTAFNDW. The Cytoplasmic portion of the chain corresponds to 174-390; it reads SKEKQFRGLQ…KEKSVLQGKL (217 aa). The segment at 334-381 is disordered; it reads GKMQDGNVDASQSKAKQQDGAAAMEMQPLKSAEGGDADDRKKASMHKK. Residues 391-410 traverse the membrane as a helical segment; the sequence is TKLAVQIGKAGLVMSAITVI. Topologically, residues 411–443 are extracellular; it reads ILVLYFTVDTFVVNKKPWLPECTPVYVQYFVKF. Residues 444–461 form a helical membrane-spanning segment; that stretch reads FIIGVTVLVVAVPEGLPL. Topologically, residues 462 to 875 are cytoplasmic; that stretch reads AVTISLAYSV…MWGRNVYDSI (414 aa). Residue Asp-499 is the 4-aspartylphosphate intermediate of the active site. The Mg(2+) site is built by Asp-820 and Asp-824. Residues 876–895 form a helical membrane-spanning segment; the sequence is SKFLQFQLTVNVVAVIVAFT. Residues 896–905 lie on the Extracellular side of the membrane; it reads GACITQDSPL. A helical membrane pass occupies residues 906–926; that stretch reads KAVQMLWVNLIMDTFASLALA. Over 927–946 the chain is Cytoplasmic; sequence TEPPTETLLLRKPYGRNKPL. Residues 947–969 traverse the membrane as a helical segment; sequence ISRTMMKNILGHAVYQLALIFTL. Over 970–987 the chain is Extracellular; that stretch reads LFVGEKMFQIDSGRNAPL. A helical membrane pass occupies residues 988 to 1009; it reads HSPPSEHYTIIFNTFVMMQLFN. Over 1010–1028 the chain is Cytoplasmic; it reads EINARKIHGERNVFDGIFR. A helical transmembrane segment spans residues 1029 to 1050; it reads NPIFCTIVLGTFAIQIVIVQFG. Residues 1051–1060 are Extracellular-facing; the sequence is GKPFSCSPLQ. The helical transmembrane segment at 1061-1082 threads the bilayer; the sequence is LDQWMWCIFIGLGELVWGQVIA. Residues 1083–1243 are Cytoplasmic-facing; sequence TIPTSRLKFL…SPIHSLETSL (161 aa). Residues Glu-1120, Arg-1132, and Leu-1134 each carry the phosphoserine modification. The segment at 1123–1140 is calmodulin-binding subdomain A; the sequence is LRRGQILWFRGLNRIQTQ. Thr-1139 carries the phosphothreonine; by PKC modification. Residues 1141–1150 are calmodulin-binding subdomain B; the sequence is IRVVKAFRSS. Phosphoserine is present on residues Ala-1146, Leu-1151, Ser-1163, His-1165, Asp-1177, and Ser-1178. Thr-1188 carries the post-translational modification Phosphothreonine. Residues 1194 to 1243 are disordered; the sequence is AALKQNSSPPSSLNKNNSAIDSGINLTTDTSKSATSSSPGSPIHSLETSL. 2 stretches are compositionally biased toward low complexity: residues 1196–1211 and 1220–1234; these read LKQN…KNNS and TTDT…SPGS. Residue Ser-1201 is modified to Phosphoserine; by PKA. Residue Ser-1211 is modified to Phosphoserine.

Belongs to the cation transport ATPase (P-type) (TC 3.A.3) family. Type IIB subfamily. Interacts with PDZD11. As to expression, mainly expressed in brain cortex. Found in low levels in skeletal muscle, heart muscle, stomach, liver, kidney and lung. Isoforms containing segment B are found in brain cortex and at low levels in other tissues. Isoforms containing segments X and W are found at low levels in all tissues. Isoforms containing segment A and segment Z are found at low levels in skeletal muscle and heart muscle.

Its subcellular location is the cell membrane. It is found in the synapse. It localises to the apical cell membrane. The protein resides in the basolateral cell membrane. It carries out the reaction Ca(2+)(in) + ATP + H2O = Ca(2+)(out) + ADP + phosphate + H(+). Its activity is regulated as follows. Up-regulated by calmodulin which increases the affinity of the pump for Ca(2+) ions. Its function is as follows. ATP-driven Ca(2+) ion pump involved in the maintenance of basal intracellular Ca(2+) levels in specialized cells of cerebellar circuit and vestibular and cochlear systems. Uses ATP as an energy source to transport cytosolic Ca(2+) ions across the plasma membrane to the extracellular compartment. Has fast activation and Ca(2+) clearance rate suited to control fast neuronal Ca(2+) dynamics. At parallel fiber to Purkinje neuron synapse, mediates presynaptic Ca(2+) efflux in response to climbing fiber-induced Ca(2+) rise. Provides for fast return of Ca(2+) concentrations back to their resting levels, ultimately contributing to long-term depression induction and motor learning. Plays an essential role in hearing and balance. In cochlear hair cells, shuttles Ca(2+) ions from stereocilia to the endolymph and dissipates Ca(2+) transients generated by the opening of the mechanoelectrical transduction channels. Regulates Ca(2+) levels in the vestibular system, where it contributes to the formation of otoconia. In non-excitable cells, regulates Ca(2+) signaling through spatial control of Ca(2+) ions extrusion and dissipation of Ca(2+) transients generated by store-operated channels. In lactating mammary gland, allows for the high content of Ca(2+) ions in the milk. This is Plasma membrane calcium-transporting ATPase 2 from Homo sapiens (Human).